A 129-amino-acid polypeptide reads, in one-letter code: D-ribose pyranase 2 (129 aa).

The active-site Proton donor is the His-20. Substrate-binding positions include Asp-28, His-96, and 118 to 120 (YAN).

Belongs to the RbsD / FucU family. RbsD subfamily. Homodecamer.

It localises to the cytoplasm. It carries out the reaction beta-D-ribopyranose = beta-D-ribofuranose. It functions in the pathway carbohydrate metabolism; D-ribose degradation; D-ribose 5-phosphate from beta-D-ribopyranose: step 1/2. In terms of biological role, catalyzes the interconversion of beta-pyran and beta-furan forms of D-ribose. The chain is D-ribose pyranase 2 from Streptomyces griseus subsp. griseus (strain JCM 4626 / CBS 651.72 / NBRC 13350 / KCC S-0626 / ISP 5235).